A 355-amino-acid polypeptide reads, in one-letter code: MYRLLIINPGSTSTKIGIYDDEKEIFEKTLRHSAEEIEKYNTIFDQFQFRKNVILDALKEANIEVSSLNAVVGRGGLLKPIVSGTYAVNQKMLEDLKVGVQGQHASNLGGIIANEIAKEINVPAYIVDPVVVDELDEVSRISGMADIPRKSIFHALNQKAVARRYAKEVGKKYEDLNLIVVHMGGGTSVGTHKDGRVIEVNNTLDGEGPFSPERSGGVPIGDLVRLCFSNKYTYEEVMKKINGKGGVVSYLNTIDFKAVVDKALEGDKKCALIYEAFTFQVAKEIGKCSTVLKGNVDAIILTGGIAYNEHVCNAIEDRVKFIAPVVRYGGEDELLALAEGGLRVLRGEEKAKEYK.

It belongs to the acetokinase family.

It is found in the cytoplasm. The catalysed reaction is butanoate + ATP = butanoyl phosphate + ADP. It participates in lipid metabolism; butanoate metabolism. Functionally, catalyzes the conversion of butyryl-CoA through butyryl phosphate to butyrate. The chain is Butyrate kinase 1 (buk1) from Clostridium acetobutylicum (strain ATCC 824 / DSM 792 / JCM 1419 / IAM 19013 / LMG 5710 / NBRC 13948 / NRRL B-527 / VKM B-1787 / 2291 / W).